Here is a 345-residue protein sequence, read N- to C-terminus: Dihydroorotase (345 aa).

Residues His13 and His15 each contribute to the Zn(2+) site. Substrate-binding positions include 15 to 17 and Asn41; that span reads HLR. Zn(2+) contacts are provided by Lys99, His136, His174, and Asp247. The residue at position 99 (Lys99) is an N6-carboxylysine. His136 contributes to the substrate binding site. Residue Asp247 is part of the active site. Substrate is bound by residues His251 and Ala263.

It belongs to the metallo-dependent hydrolases superfamily. DHOase family. Class II DHOase subfamily. Homodimer. Requires Zn(2+) as cofactor.

It carries out the reaction (S)-dihydroorotate + H2O = N-carbamoyl-L-aspartate + H(+). It participates in pyrimidine metabolism; UMP biosynthesis via de novo pathway; (S)-dihydroorotate from bicarbonate: step 3/3. Its function is as follows. Catalyzes the reversible cyclization of carbamoyl aspartate to dihydroorotate. This chain is Dihydroorotase, found in Halorhodospira halophila (strain DSM 244 / SL1) (Ectothiorhodospira halophila (strain DSM 244 / SL1)).